The chain runs to 123 residues: Holo-[acyl-carrier-protein] synthase (123 aa).

Mg(2+) contacts are provided by Asp7 and Glu56.

The protein belongs to the P-Pant transferase superfamily. AcpS family. Mg(2+) serves as cofactor.

It is found in the cytoplasm. The catalysed reaction is apo-[ACP] + CoA = holo-[ACP] + adenosine 3',5'-bisphosphate + H(+). Transfers the 4'-phosphopantetheine moiety from coenzyme A to a Ser of acyl-carrier-protein. This chain is Holo-[acyl-carrier-protein] synthase, found in Carboxydothermus hydrogenoformans (strain ATCC BAA-161 / DSM 6008 / Z-2901).